Here is a 393-residue protein sequence, read N- to C-terminus: tRNA(Met) cytidine acetate ligase (393 aa).

The ATP site is built by Gly81, Asn142, and Arg167.

Belongs to the TmcAL family.

It is found in the cytoplasm. The catalysed reaction is cytidine(34) in elongator tRNA(Met) + acetate + ATP = N(4)-acetylcytidine(34) in elongator tRNA(Met) + AMP + diphosphate. In terms of biological role, catalyzes the formation of N(4)-acetylcytidine (ac(4)C) at the wobble position of elongator tRNA(Met), using acetate and ATP as substrates. First activates an acetate ion to form acetyladenylate (Ac-AMP) and then transfers the acetyl group to tRNA to form ac(4)C34. This is tRNA(Met) cytidine acetate ligase from Bacillus cereus (strain 03BB102).